A 407-amino-acid chain; its full sequence is Venom metalloproteinase 3 (407 aa).

Asn42, Asn91, Asn126, and Asn166 each carry an N-linked (GlcNAc...) asparagine glycan. Residues 191-405 form the Peptidase M12B domain; sequence FYPKLLVLVD…TSAACLKDTY (215 aa). 2 disulfides stabilise this stretch: Cys317–Cys400 and Cys356–Cys384. His340 contacts Zn(2+). The active site involves Glu341. Residues His344 and His350 each contribute to the Zn(2+) site. A glycan (N-linked (GlcNAc...) asparagine) is linked at Asn391.

In the C-terminal section; belongs to the venom metalloproteinase (M12B) family. As to quaternary structure, monomer. It depends on Zn(2+) as a cofactor. As to expression, expressed by the venom gland.

It is found in the secreted. Its activity is regulated as follows. The gelatinase activity is inhibited by EDTA. Functionally, the recombinant protein has gelatinase activity. In vivo, injection of this recombinant into fifth instar L.oleracea (host) larvae results in partial insect mortality associated with the molt to sixth instar, with surviving insects showing retarded development and growth. This is Venom metalloproteinase 3 from Eulophus pennicornis (Parasitoid wasp).